The primary structure comprises 382 residues: Lipoyl synthase, mitochondrial (382 aa).

A mitochondrion-targeting transit peptide spans 1–30; the sequence is MHGRRHLAASLARALTYAPSRSISSTPSLL. Polar residues predominate over residues 25–34; it reads STPSLLQTLD. The tract at residues 25 to 46 is disordered; sequence STPSLLQTLDPSTPSPAAAPPT. 7 residues coordinate [4Fe-4S] cluster: Cys112, Cys117, Cys123, Cys143, Cys147, Cys150, and Ser359. Residues 128-348 enclose the Radical SAM core domain; sequence ETGTATATIM…RSLGVDMGFR (221 aa).

This sequence belongs to the radical SAM superfamily. Lipoyl synthase family. It depends on [4Fe-4S] cluster as a cofactor.

The protein resides in the mitochondrion. It catalyses the reaction [[Fe-S] cluster scaffold protein carrying a second [4Fe-4S](2+) cluster] + N(6)-octanoyl-L-lysyl-[protein] + 2 oxidized [2Fe-2S]-[ferredoxin] + 2 S-adenosyl-L-methionine + 4 H(+) = [[Fe-S] cluster scaffold protein] + N(6)-[(R)-dihydrolipoyl]-L-lysyl-[protein] + 4 Fe(3+) + 2 hydrogen sulfide + 2 5'-deoxyadenosine + 2 L-methionine + 2 reduced [2Fe-2S]-[ferredoxin]. It participates in protein modification; protein lipoylation via endogenous pathway; protein N(6)-(lipoyl)lysine from octanoyl-[acyl-carrier-protein]: step 2/2. Catalyzes the radical-mediated insertion of two sulfur atoms into the C-6 and C-8 positions of the octanoyl moiety bound to the lipoyl domains of lipoate-dependent enzymes, thereby converting the octanoylated domains into lipoylated derivatives. In Oryza sativa subsp. japonica (Rice), this protein is Lipoyl synthase, mitochondrial.